The sequence spans 681 residues: Serine/threonine-protein kinase PAK 6 (681 aa).

Disordered stretches follow at residues 1 to 30, 149 to 169, 200 to 256, and 268 to 355; these read MFRK…DPKE, GGTP…PRVL, QSSP…ESSL, and TAAT…PRTW. A CRIB domain is found at 12-25; the sequence is ISAPQNFQHRVHTS. Residues 26-406 are linker; that stretch reads FDPKEGKFVG…VVDQGDPRLL (381 aa). Low complexity-rich tracts occupy residues 201–212 and 268–278; these read SSPPGASPPTGT and TAATAPPSSSK. Residues 308–333 show a composition bias toward polar residues; that stretch reads SLPSDQPVGTFSPLTTSDTSSPQKSL. In terms of domain architecture, Protein kinase spans 407 to 658; it reads LDSYVKIGEG…AQELLDHPFL (252 aa). ATP contacts are provided by residues 413–421 and Lys436; that span reads IGEGSTGIV. Asp526 functions as the Proton acceptor in the catalytic mechanism. A Phosphoserine; by autocatalysis modification is found at Ser560.

Belongs to the protein kinase superfamily. STE Ser/Thr protein kinase family. STE20 subfamily. As to quaternary structure, interacts tightly with GTP-bound but not GDP-bound CDC42/p21 and RAC1. Interacts with the androgen receptor AR and the estrogen receptor ESR1. Interacts with IQGAP1 and PPM1B. In terms of processing, autophosphorylated. Phosphorylated by MAP2K6//MAPKK6, leading to PAK6 activation. Selectively expressed in brain and testis, with lower levels in multiple tissues including prostate and breast.

It is found in the cytoplasm. It localises to the nucleus. It catalyses the reaction L-seryl-[protein] + ATP = O-phospho-L-seryl-[protein] + ADP + H(+). It carries out the reaction L-threonyl-[protein] + ATP = O-phospho-L-threonyl-[protein] + ADP + H(+). Its function is as follows. Serine/threonine protein kinase that plays a role in the regulation of gene transcription. The kinase activity is induced by various effectors including AR or MAP2K6/MAPKK6. Phosphorylates the DNA-binding domain of androgen receptor/AR and thereby inhibits AR-mediated transcription. Also inhibits ESR1-mediated transcription. May play a role in cytoskeleton regulation by interacting with IQGAP1. May protect cells from apoptosis through phosphorylation of BAD. The polypeptide is Serine/threonine-protein kinase PAK 6 (PAK6) (Homo sapiens (Human)).